The sequence spans 328 residues: tRNA-modifying protein YgfZ (328 aa).

Positions 28 and 190 each coordinate folate.

Belongs to the tRNA-modifying YgfZ family.

It is found in the cytoplasm. In terms of biological role, folate-binding protein involved in regulating the level of ATP-DnaA and in the modification of some tRNAs. It is probably a key factor in regulatory networks that act via tRNA modification, such as initiation of chromosomal replication. This is tRNA-modifying protein YgfZ from Sodalis glossinidius (strain morsitans).